The primary structure comprises 139 residues: Centromere protein S (139 aa).

The interval 99–139 is disordered; the sequence is ELASSNMEQKEKKKKKSSAAKGRKTEENETPVTESEDSNMA. Basic residues predominate over residues 110–120; that stretch reads KKKKKSSAAKG.

This sequence belongs to the TAF9 family. CENP-S/MHF1 subfamily. In terms of assembly, heterodimer with CENPX, sometimes called MHF; this interaction stabilizes both partners. MHF heterodimers can assemble to form tetrameric structures. MHF also coassemble with CENPT-CENPW heterodimers at centromeres to form the tetrameric CENP-T-W-S-X complex. Forms a discrete complex with FANCM and CENPX, called FANCM-MHF; this interaction, probably mediated by direct binding between CENPS and FANCM, leads to synergistic activation of double-stranded DNA binding and strongly stimulates FANCM-mediated DNA remodeling. Recruited by FANCM to the Fanconi anemia (FA) core complex, which consists of CENPS, CENPX, FANCA, FANCB, FANCC, FANCE, FANCF, FANCG, FANCL, FANCM, FAAP24 and FAAP100. The FA core complex associates with Bloom syndrome (BLM) complex, which consists of at least BLM, DNA topoisomerase 3-alpha (TOP3A), RMI1/BLAP75, RPA1/RPA70 and RPA2/RPA32. The super complex between FA and BLM is called BRAFT. Component of the CENPA-CAD complex, composed of CENPI, CENPK, CENPL, CENPO, CENPP, CENPQ, CENPR and CENPS. The CENPA-CAD complex is probably recruited on centromeres by the CENPA-NAC complex, at least composed of CENPA, CENPC, CENPH, CENPM, CENPN, CENPT and CENPU.

Its subcellular location is the nucleus. It localises to the chromosome. The protein resides in the centromere. The protein localises to the kinetochore. Its function is as follows. DNA-binding component of the Fanconi anemia (FA) core complex. Required for the normal activation of the FA pathway, leading to monoubiquitination of the FANCI-FANCD2 complex in response to DNA damage, cellular resistance to DNA cross-linking drugs, and prevention of chromosomal breakage. In complex with CENPX (MHF heterodimer), crucial cofactor for FANCM in both binding and ATP-dependent remodeling of DNA. Stabilizes FANCM. In complex with CENPX and FANCM (but not other FANC proteins), rapidly recruited to blocked forks and promotes gene conversion at blocked replication forks. In complex with CENPT, CENPW and CENPX (CENP-T-W-S-X heterotetramer), involved in the formation of a functional kinetochore outer plate, which is essential for kinetochore-microtubule attachment and faithful mitotic progression. As a component of MHF and CENP-T-W-S-X complexes, binds DNA and bends it to form a nucleosome-like structure. DNA-binding function is fulfilled in the presence of CENPX, with the following preference for DNA substates: Holliday junction &gt; double-stranded &gt; splay arm &gt; single-stranded. Does not bind DNA on its own. This Gallus gallus (Chicken) protein is Centromere protein S (CENPS).